The following is an 816-amino-acid chain: Cation/H(+) antiporter 8 (816 aa).

The next 12 helical transmembrane spans lie at 64–84 (PKLEIVILLVFFLWQGFNILF), 97–117 (MMLAGLLLNVLVTLSGENSII), 127–147 (IDVAGCLGSFGFLIFWFLKGV), 163–183 (VTGVAAVTFPIVVGFLLFNLK), 197–214 (VMLLMESITSFSGIARLL), 227–247 (VALSSALVSDIVGLLLLIANV), 255–275 (ADGLAILTEITLFLVIAFAVV), 297–317 (IHGVLVLVCLSCMYWEDLSQF), 343–363 (LESFNFGIILPLFLTAVMLRT), 382–402 (FAVASLVLLIFLLKLSVSVIV), 413–433 (SIILALIMSHKGIIELSFYLF), and 447–467 (ILVLSIVLNSLLIPMAIGFLY).

The protein belongs to the monovalent cation:proton antiporter 2 (CPA2) transporter (TC 2.A.37) family. CHX (TC 2.A.37.4) subfamily. In terms of tissue distribution, specifically expressed in pollen.

Its subcellular location is the membrane. Its function is as follows. May operate as a cation/H(+) antiporter. This is Cation/H(+) antiporter 8 (CHX8) from Arabidopsis thaliana (Mouse-ear cress).